Here is a 274-residue protein sequence, read N- to C-terminus: Short-chain dehydrogenase/reductase bsc3 (274 aa).

Residues Ile14, Tyr170, Lys174, Ile203, and Thr205 each contribute to the NADP(+) site. The active-site Proton donor is the Tyr170. The active-site Lowers pKa of active site Tyr is the Lys174.

Belongs to the short-chain dehydrogenases/reductases (SDR) family.

It participates in mycotoxin biosynthesis. Short-chain dehydrogenase/reductase; part of the gene cluster that mediates the biosynthesis of the diterpene glucoside brassicicene C. In the first step of the brassicicene C biosynthesis, the bifunctional diterpene synthase bsc8 that possesses both prenyl transferase and terpene cyclase activity, converts isopentenyl diphosphate and dimethylallyl diphosphate into geranylgeranyl diphosphate (GGDP) that is further converted into fusicocca-2,10(14)-diene, the first precursor for brassicicene C. Fusicocca-2,10(14)-diene is then substrate of cytochrome P450 monooxygenase bsc1 for hydroxylation at the C-8 position. Oxidation at C-16 position to aldehyde is then catalyzed by the cytochrome P450 monooyxygenase bsc7, yielding fusicocca-2,10(14)-diene-8-beta,16-diol. Follows the isomerization of the double bond and reduction of aldehyde to alcohol catalyzed by the short-chain dehydrogenase/reductase bsc3 to yield the diol compound fusicocca-1,10(14)-diene-8 beta,16-diol. The next step is the oxidation at the C-3 position of fusicocca-2,10(14)-diene-8-beta,16-diol catalyzed by the alpha-ketoglutarate dependent dioxygenase bsc9, to produce a triol compound. Methylation of the hydroxy group at position 16 is performed by the methyltransferase bsc6. 16-O-methylation is followed by oxidation at the C-13 position to ketone and an alkyl shift of the methyl group leads to brassicicene C. Although the probable acetyltransferase bsc4 is included in the gene cluster, no acetylation reactions are necessary for brassicicene C biosynthesis. However, the fact that brassicicene E, which is a structurally related compound having an acetoxy group at position 12, was previously isolated from another strain of A.brassicicola suggests that the ATCC 96836 strain might also produce a small amount of brassicicene E. In Alternaria brassicicola (Dark leaf spot agent), this protein is Short-chain dehydrogenase/reductase bsc3.